The following is a 77-amino-acid chain: Probable Fe(2+)-trafficking protein (77 aa).

It belongs to the Fe(2+)-trafficking protein family.

Functionally, could be a mediator in iron transactions between iron acquisition and iron-requiring processes, such as synthesis and/or repair of Fe-S clusters in biosynthetic enzymes. The polypeptide is Probable Fe(2+)-trafficking protein (Baumannia cicadellinicola subsp. Homalodisca coagulata).